A 561-amino-acid polypeptide reads, in one-letter code: Phosphoinositide phospholipase C 1 (561 aa).

The region spanning 21 to 54 (EPPEEIKNLFHDYSQDDRMSADEMLRFVIQVQGE) is the EF-hand domain. The 145-residue stretch at 105 to 249 (QDMNQPLSHY…LKNKILISTK (145 aa)) folds into the PI-PLC X-box domain. Active-site residues include His120 and His166. Residues 256–266 (QTQISKGSTTD) show a composition bias toward polar residues. Positions 256 to 285 (QTQISKGSTTDESTRAKKISDAEEQVQEED) are disordered. Positions 267–276 (ESTRAKKISD) are enriched in basic and acidic residues. Positions 294-410 (RDLISIHAGN…GYVKKPDVLL (117 aa)) constitute a PI-PLC Y-box domain. The 128-residue stretch at 414–541 (PEGEIFDPCS…PGIRAVRLHD (128 aa)) folds into the C2 domain. Ca(2+)-binding residues include Asp452, Asp458, Asp510, Asp512, and Asp518.

Ca(2+) serves as cofactor. As to expression, expressed in stems, leaves, roots, flowers and siliques. Predominant in the vascular tissues of roots and leaves.

The protein resides in the cell membrane. It carries out the reaction a 1,2-diacyl-sn-glycero-3-phospho-(1D-myo-inositol-4,5-bisphosphate) + H2O = 1D-myo-inositol 1,4,5-trisphosphate + a 1,2-diacyl-sn-glycerol + H(+). In terms of biological role, the production of the second messenger molecules diacylglycerol (DAG) and inositol 1,4,5-trisphosphate (IP3) is mediated by activated phosphatidylinositol-specific phospholipase C enzymes. Required for secondary responses to abscisic acid signals. The chain is Phosphoinositide phospholipase C 1 (PLC1) from Arabidopsis thaliana (Mouse-ear cress).